The primary structure comprises 197 residues: MRIYQCHFCSSPVYPGHGIMFVRNDAKEFRFCRSKCHKNFKQRRNPRKLKWTKAFRKAAGKELAVDSTLTFAQRRNVPVRYNRELVATTLKAMSRIEEIRQKRERAFYKNRMKGNSERDFLRDKKLVETNPELLRLREVEIANRLAKEQAAAEEVSEEESEEEEDMEVDSEEEEEEKLQKQKILLKNKKRNAKKLAF.

Residues 147 to 180 are disordered; sequence KEQAAAEEVSEEESEEEEDMEVDSEEEEEEKLQK. The span at 154-176 shows a compositional bias: acidic residues; sequence EVSEEESEEEEDMEVDSEEEEEE.

This sequence belongs to the eukaryotic ribosomal protein eL24 family. Associated with nucleolar and cytoplasmic pre-60S particles. At the end of biogenesis it dissociates from cytoplasmic pre-60S particles and is likely to be exchanged for its ribosomal homolog, RPL24.

The protein resides in the cytoplasm. It localises to the nucleus. Involved in the biogenesis of the 60S ribosomal subunit. Ensures the docking of NOG1 to pre-60S particles. Activates and recruits ATPase AFG2 to cytoplasmic pre-60S ribosomal particles. The polypeptide is Ribosome biogenesis protein RLP24 (RLP24) (Candida glabrata (strain ATCC 2001 / BCRC 20586 / JCM 3761 / NBRC 0622 / NRRL Y-65 / CBS 138) (Yeast)).